The following is a 1630-amino-acid chain: Transient receptor potential cation channel subfamily M member 1 (1630 aa).

5 disordered regions span residues 1-25 (MGSMRKMSSSFKRGSIKSSTSGSQK), 65-92 (PLPSVTPSSTAEDTKQGDAQSGKWSVSK), 453-492 (APPVDTKVAEKEKKPPTATTKGRGKGKGKKKGKVKEEVEE), 620-643 (LGMEDDEPPAKGKKKKKKKKEEEI), and 824-858 (SKENEDGKEKEEENVDANADAGSRKGDEENEHKKQ). The Cytoplasmic portion of the chain corresponds to 1–877 (MGSMRKMSSS…CEFYNAPIVK (877 aa)). The segment covering 8–25 (SSSFKRGSIKSSTSGSQK) has biased composition (low complexity). The span at 69–92 (VTPSSTAEDTKQGDAQSGKWSVSK) shows a compositional bias: polar residues. Basic residues predominate over residues 474–485 (GRGKGKGKKKGK). Composition is skewed to basic and acidic residues over residues 825–834 (KENEDGKEKE) and 845–855 (GSRKGDEENEH). A helical transmembrane segment spans residues 878–898 (FWFYTISYLGYLLLFNYVILV). Over 899-944 (RMDGWPSPQEWIVISYIVSLALEKIREILMSEPGKLSQKIKVWLQE) the chain is Extracellular. A helical transmembrane segment spans residues 945–965 (YWNITDLVAISMFMVGAILRL). The Cytoplasmic portion of the chain corresponds to 966–975 (QNQPYMGYGR). Residues 976 to 996 (VIYCVDIILWYIRVLDIFGVN) traverse the membrane as a helical segment. Over 997–1008 (KYLGPYVMMIGK) the chain is Extracellular. The helical transmembrane segment at 1009 to 1029 (MMIDMLYFVVIMLVVLMSFGV) threads the bilayer. The Cytoplasmic portion of the chain corresponds to 1030-1107 (ARQAILHPEE…CIPGAWLTPA (78 aa)). A helical membrane pass occupies residues 1108–1128 (LMACYLLVANILLVNLLIAVF). N-linked (GlcNAc...) asparagine glycosylation is present at Asn1129. Topologically, residues 1129-1158 (NNTFFEVKSISNQVWKFQRYQLIMTFHDRP) are extracellular. A helical transmembrane segment spans residues 1159-1179 (VLPPPMIILSHIYIIVMRLSG). Over 1180-1630 (RCRKKREGDQ…QEKGNPETEC (451 aa)) the chain is Cytoplasmic. The stretch at 1235–1255 (IRVTSERVENMSMRLEEINER) forms a coiled coil. 2 disordered regions span residues 1362-1414 (EDVK…AGEL) and 1575-1630 (CLRS…ETEC).

The protein belongs to the transient receptor (TC 1.A.4) family. LTrpC subfamily. TRPM1 sub-subfamily. As to quaternary structure, interacts with TRPM3; the interaction results in the formation of a heteromultimeric cation channel complex that are functionally different from the homomeric channels. Interacts with GPR179. Associates with both guanine nucleotide-binding proteins G(o) and beta-gamma G protein dimer; implicated in directly regulating TRPM1 channel open-state.

The protein localises to the cell membrane. Its subcellular location is the endoplasmic reticulum membrane. It is found in the cell projection. It localises to the axon. The enzyme catalyses Ca(2+)(in) = Ca(2+)(out). It catalyses the reaction Mg(2+)(in) = Mg(2+)(out). It carries out the reaction Mn(2+)(in) = Mn(2+)(out). The catalysed reaction is Ni(2+)(in) = Ni(2+)(out). Its activity is regulated as follows. Inhibited by extracellular zinc ions. Inhibited by intracellular Mg(2+). Activated by the neuroactive steroid pregnenolone sulfate. Negatively regulated by activation of GRM6 receptors in the ON-bipolar cells. Constitutively open nonselective divalent cation-conducting channels which mediate the influx of Ca(2+), Mg(2+), Mn(2+), Ba(2+), and Ni(2+) into the cytoplasm, leading to membrane depolarization. Impermeable to zinc ions. In addition, forms heteromultimeric ion channels with TRPM3 which are permeable for calcium and zinc ions. Plays an essential role for the depolarizing photoresponse of retinal ON bipolar cells. In the dark, tonic release of glutamate activates the G-protein coupled receptor for glutamate GRM6, its activation induces the release of G(o) protein and the beta-gamma G protein dimer. Both subunits can interact and inactivate the TRPM1 channel. A light onset, induces decrease in glutamate release and deactivation of GRM6 leading to channel opening and membrane depolarization. May play a role in metastasis suppression. The chain is Transient receptor potential cation channel subfamily M member 1 from Rattus norvegicus (Rat).